Here is a 467-residue protein sequence, read N- to C-terminus: 2-succinylbenzoate--CoA ligase (467 aa).

This sequence belongs to the ATP-dependent AMP-binding enzyme family. MenE subfamily.

It catalyses the reaction 2-succinylbenzoate + ATP + CoA = 2-succinylbenzoyl-CoA + AMP + diphosphate. Its pathway is quinol/quinone metabolism; 1,4-dihydroxy-2-naphthoate biosynthesis; 1,4-dihydroxy-2-naphthoate from chorismate: step 5/7. It functions in the pathway quinol/quinone metabolism; menaquinone biosynthesis. In terms of biological role, converts 2-succinylbenzoate (OSB) to 2-succinylbenzoyl-CoA (OSB-CoA). This chain is 2-succinylbenzoate--CoA ligase, found in Listeria innocua serovar 6a (strain ATCC BAA-680 / CLIP 11262).